Here is a 219-residue protein sequence, read N- to C-terminus: Asperlin biosynthesis cluster protein I (219 aa).

The segment at 97-124 (TGSSDNSPTATGIGAAGLTGDRPSSSGA) is disordered. A compositionally biased stretch (low complexity) spans 105–116 (TATGIGAAGLTG).

It functions in the pathway polyketide biosynthesis. Functionally, part of the gene cluster that mediates the biosynthesis of asperlin, a polyketide showing anti-inflammatory, antitumor and antibiotic activities. The first step of the asperlin biosynthesis is the production of the intermediate 2,4,6-octatrienoic acid by the highly redusing polyketide synthase alnA with cleavage of the PKS product by the esterase alnB. 2,4,6-octatrienoic acid is further converted to asperlin via several steps involving the remaining enzymes from the cluster. The protein is Asperlin biosynthesis cluster protein I of Emericella nidulans (strain FGSC A4 / ATCC 38163 / CBS 112.46 / NRRL 194 / M139) (Aspergillus nidulans).